A 76-amino-acid polypeptide reads, in one-letter code: Large ribosomal subunit protein bL28 (76 aa).

It belongs to the bacterial ribosomal protein bL28 family.

This chain is Large ribosomal subunit protein bL28, found in Opitutus terrae (strain DSM 11246 / JCM 15787 / PB90-1).